The primary structure comprises 409 residues: Multifunctional CCA protein (409 aa).

Residues G8 and R11 each coordinate ATP. The CTP site is built by G8 and R11. The Mg(2+) site is built by D21 and D23. Residues R91, R137, and R140 each contribute to the ATP site. The CTP site is built by R91, R137, and R140. In terms of domain architecture, HD spans 228 to 329 (TGVHVLSVLE…LELLQSFDVY (102 aa)).

Belongs to the tRNA nucleotidyltransferase/poly(A) polymerase family. Bacterial CCA-adding enzyme type 1 subfamily. Monomer. Can also form homodimers and oligomers. The cofactor is Mg(2+). Requires Ni(2+) as cofactor.

The enzyme catalyses a tRNA precursor + 2 CTP + ATP = a tRNA with a 3' CCA end + 3 diphosphate. The catalysed reaction is a tRNA with a 3' CCA end + 2 CTP + ATP = a tRNA with a 3' CCACCA end + 3 diphosphate. In terms of biological role, catalyzes the addition and repair of the essential 3'-terminal CCA sequence in tRNAs without using a nucleic acid template. Adds these three nucleotides in the order of C, C, and A to the tRNA nucleotide-73, using CTP and ATP as substrates and producing inorganic pyrophosphate. tRNA 3'-terminal CCA addition is required both for tRNA processing and repair. Also involved in tRNA surveillance by mediating tandem CCA addition to generate a CCACCA at the 3' terminus of unstable tRNAs. While stable tRNAs receive only 3'-terminal CCA, unstable tRNAs are marked with CCACCA and rapidly degraded. This Pseudomonas savastanoi pv. phaseolicola (strain 1448A / Race 6) (Pseudomonas syringae pv. phaseolicola (strain 1448A / Race 6)) protein is Multifunctional CCA protein.